Consider the following 58-residue polypeptide: Ribulose bisphosphate carboxylase large chain (58 aa).

Residues 1–2 (MS) constitute a propeptide that is removed on maturation. Proline 3 carries the post-translational modification N-acetylproline. Lysine 14 is subject to N6,N6,N6-trimethyllysine.

It belongs to the RuBisCO large chain family. Type I subfamily. Heterohexadecamer of 8 large chains and 8 small chains.

The protein resides in the plastid. The protein localises to the chloroplast. It catalyses the reaction 2 (2R)-3-phosphoglycerate + 2 H(+) = D-ribulose 1,5-bisphosphate + CO2 + H2O. It carries out the reaction D-ribulose 1,5-bisphosphate + O2 = 2-phosphoglycolate + (2R)-3-phosphoglycerate + 2 H(+). In terms of biological role, ruBisCO catalyzes two reactions: the carboxylation of D-ribulose 1,5-bisphosphate, the primary event in carbon dioxide fixation, as well as the oxidative fragmentation of the pentose substrate in the photorespiration process. Both reactions occur simultaneously and in competition at the same active site. This Euphorbia characias (Albanian spurge) protein is Ribulose bisphosphate carboxylase large chain (rbcL).